A 367-amino-acid polypeptide reads, in one-letter code: 3-dehydroquinate synthase (367 aa).

NAD(+) is bound by residues 69–74 (DGEAFK), 103–107 (GVIGD), 127–128 (TT), K140, and K149. Zn(2+) contacts are provided by E182, H245, and H262.

This sequence belongs to the sugar phosphate cyclases superfamily. Dehydroquinate synthase family. Requires NAD(+) as cofactor. Co(2+) is required as a cofactor. Zn(2+) serves as cofactor.

The protein resides in the cytoplasm. It catalyses the reaction 7-phospho-2-dehydro-3-deoxy-D-arabino-heptonate = 3-dehydroquinate + phosphate. Its pathway is metabolic intermediate biosynthesis; chorismate biosynthesis; chorismate from D-erythrose 4-phosphate and phosphoenolpyruvate: step 2/7. Catalyzes the conversion of 3-deoxy-D-arabino-heptulosonate 7-phosphate (DAHP) to dehydroquinate (DHQ). This is 3-dehydroquinate synthase from Pseudomonas syringae pv. tomato (strain ATCC BAA-871 / DC3000).